Here is a 438-residue protein sequence, read N- to C-terminus: MAQFYTPGRRTATRKILIVTATDLDAFGQGVAREQGKTLFISGLLPGEQAEVILSEEKRHFARGRVTRLISHSPQRVAPRCPHAGVCGGCQQQHAAIALQQQSKSQALQRLMARETGVDIAPQVIAGEPYGYRRRARFGLQFNVKTQRVVLGFRQAASNDLVALKACPVLAPALEALLLPLGECLSALRARRRLGHLELVLADNGPLMVLRHLDPLSLSDREALSAFARQRGLTLYLSDGGAPQRLLGEAPYYQIDGSRLDFNPQDFIQVNAAVNAQMVGQALAWLDVRADERVLDLFCGMGNFTLPLARLALRVVGVEGVPGLVATAQNNARNNGLSNVEFFHQNLEEDVTRQAWASQGFDKILLDPARAGAPGVMQHIVRLAPRRVVYVSCNPTTLARDSQTLLQGGYRLTRLCMLDMFPHTGHLESMALFESAAQ.

Positions 4-68 (FYTPGRRTAT…RHFARGRVTR (65 aa)) constitute a TRAM domain. Cys81, Cys87, Cys90, and Cys167 together coordinate [4Fe-4S] cluster. Positions 269, 298, 303, 319, 346, and 367 each coordinate S-adenosyl-L-methionine. The active-site Nucleophile is the Cys393.

Belongs to the class I-like SAM-binding methyltransferase superfamily. RNA M5U methyltransferase family. RlmD subfamily.

It carries out the reaction uridine(1939) in 23S rRNA + S-adenosyl-L-methionine = 5-methyluridine(1939) in 23S rRNA + S-adenosyl-L-homocysteine + H(+). Functionally, catalyzes the formation of 5-methyl-uridine at position 1939 (m5U1939) in 23S rRNA. The protein is 23S rRNA (uracil(1939)-C(5))-methyltransferase RlmD of Edwardsiella ictaluri (strain 93-146).